Consider the following 157-residue polypeptide: Crossover junction endodeoxyribonuclease RuvC (157 aa).

Catalysis depends on residues Asp7, Glu67, and Asp140. Residues Asp7, Glu67, and Asp140 each coordinate Mg(2+).

Belongs to the RuvC family. As to quaternary structure, homodimer which binds Holliday junction (HJ) DNA. The HJ becomes 2-fold symmetrical on binding to RuvC with unstacked arms; it has a different conformation from HJ DNA in complex with RuvA. In the full resolvosome a probable DNA-RuvA(4)-RuvB(12)-RuvC(2) complex forms which resolves the HJ. Mg(2+) serves as cofactor.

The protein localises to the cytoplasm. It carries out the reaction Endonucleolytic cleavage at a junction such as a reciprocal single-stranded crossover between two homologous DNA duplexes (Holliday junction).. Functionally, the RuvA-RuvB-RuvC complex processes Holliday junction (HJ) DNA during genetic recombination and DNA repair. Endonuclease that resolves HJ intermediates. Cleaves cruciform DNA by making single-stranded nicks across the HJ at symmetrical positions within the homologous arms, yielding a 5'-phosphate and a 3'-hydroxyl group; requires a central core of homology in the junction. The consensus cleavage sequence is 5'-(A/T)TT(C/G)-3'. Cleavage occurs on the 3'-side of the TT dinucleotide at the point of strand exchange. HJ branch migration catalyzed by RuvA-RuvB allows RuvC to scan DNA until it finds its consensus sequence, where it cleaves and resolves the cruciform DNA. This chain is Crossover junction endodeoxyribonuclease RuvC, found in Rickettsia prowazekii (strain Madrid E).